The chain runs to 227 residues: uncharacterized protein (227 aa).

7 helical membrane-spanning segments follow: residues 25 to 45 (LLGF…NAGF), 49 to 69 (AAFG…YGMI), 80 to 100 (TGVT…GPVL), 111 to 131 (KIVG…SALA), 144 to 164 (FLTV…FLGI), 165 to 185 (PALA…MIMW), and 201 to 221 (AALT…NILL).

It is found in the cell membrane. This is an uncharacterized protein from Neisseria meningitidis serogroup B (strain ATCC BAA-335 / MC58).